The primary structure comprises 315 residues: Ornithine carbamoyltransferase (315 aa).

Residues 57–60 (STRT), Q84, R108, and 135–138 (HPCQ) contribute to the carbamoyl phosphate site. L-ornithine is bound by residues N166, D230, and 234-235 (SM). Carbamoyl phosphate-binding positions include 270–271 (CL) and R298.

It belongs to the aspartate/ornithine carbamoyltransferase superfamily. OTCase family.

The protein localises to the cytoplasm. The catalysed reaction is carbamoyl phosphate + L-ornithine = L-citrulline + phosphate + H(+). It functions in the pathway amino-acid biosynthesis; L-arginine biosynthesis; L-arginine from L-ornithine and carbamoyl phosphate: step 1/3. Its function is as follows. Reversibly catalyzes the transfer of the carbamoyl group from carbamoyl phosphate (CP) to the N(epsilon) atom of ornithine (ORN) to produce L-citrulline. The protein is Ornithine carbamoyltransferase of Thermococcus kodakarensis (strain ATCC BAA-918 / JCM 12380 / KOD1) (Pyrococcus kodakaraensis (strain KOD1)).